The sequence spans 455 residues: UDP-N-acetylmuramoylalanine--D-glutamate ligase (455 aa).

Residue 112-118 (GTNGKTT) coordinates ATP.

The protein belongs to the MurCDEF family.

The protein localises to the cytoplasm. It carries out the reaction UDP-N-acetyl-alpha-D-muramoyl-L-alanine + D-glutamate + ATP = UDP-N-acetyl-alpha-D-muramoyl-L-alanyl-D-glutamate + ADP + phosphate + H(+). It functions in the pathway cell wall biogenesis; peptidoglycan biosynthesis. Its function is as follows. Cell wall formation. Catalyzes the addition of glutamate to the nucleotide precursor UDP-N-acetylmuramoyl-L-alanine (UMA). This is UDP-N-acetylmuramoylalanine--D-glutamate ligase from Trichormus variabilis (strain ATCC 29413 / PCC 7937) (Anabaena variabilis).